A 293-amino-acid chain; its full sequence is MRGVIVPLVTPFNEDYSIDVPALEEHIDFLQKAGVHGIFINATTGEFTSLSVEERKFLAEKGRELVNTTFYLVGTASTNTFEVIELTKHAQDLGADYVVIAPPYYCPLNETALFRHYSMVAERTDIPIILYNIPSCANPLSVQLIKRLALEYSNIAGVKETIDSVNHVRDVIIEVKGEREDFMVFTGLDQHFLNTLILGGDGGIMACANFAPEVHLALYKAFQEKRFKDAFIYAQKLARLSKVYDLASSFGSAIKLAMSLRGFSIKPVLRPPYIIDGDEVKEEIRKLLREVLY.

Residues T43 and Y105 each act as charge relay system in the active site. Catalysis depends on Y131, which acts as the Proton donor. The active-site Schiff-base intermediate with substrate is the K159.

This sequence belongs to the DapA family. As to quaternary structure, homotetramer.

The protein resides in the cytoplasm. This is an uncharacterized protein from Thermococcus onnurineus (strain NA1).